Here is a 185-residue protein sequence, read N- to C-terminus: Ribosome-recycling factor (185 aa).

This sequence belongs to the RRF family.

It is found in the cytoplasm. In terms of biological role, responsible for the release of ribosomes from messenger RNA at the termination of protein biosynthesis. May increase the efficiency of translation by recycling ribosomes from one round of translation to another. The chain is Ribosome-recycling factor from Pectobacterium carotovorum subsp. carotovorum (strain PC1).